The primary structure comprises 586 residues: Thioredoxin domain-containing protein 3 (586 aa).

The region spanning 10-116 (LQSVVNSQNL…NRKVITLIDE (107 aa)) is the Thioredoxin domain. The cysteines at positions 39 and 42 are disulfide-linked. NDK stretches follow at residues 157–254 (MAII…VLEE), 312–452 (VQTT…STLA), and 453–586 (LIKP…NPEN).

This sequence in the C-terminal section; belongs to the NDK family. As to quaternary structure, monomer. In terms of tissue distribution, testis-specific. Expressed mainly in round spermatids.

It localises to the cytoplasm. Functionally, probably required during the final stages of sperm tail maturation in the testis and/or epididymis, where extensive disulfide bonding of fibrous sheath (FS) proteins occurs. In vitro, it has neither nucleoside diphosphate kinase (NDPK) activity nor reducing activity on disulfide bonds. Exhibits a 3'-5' exonuclease activity with a preference for single-stranded DNA, suggesting roles in DNA proofreading and repair. This is Thioredoxin domain-containing protein 3 (Nme8) from Mus musculus (Mouse).